A 688-amino-acid polypeptide reads, in one-letter code: Glycine--tRNA ligase beta subunit (688 aa).

The protein belongs to the class-II aminoacyl-tRNA synthetase family. Tetramer of two alpha and two beta subunits.

It is found in the cytoplasm. It catalyses the reaction tRNA(Gly) + glycine + ATP = glycyl-tRNA(Gly) + AMP + diphosphate. The sequence is that of Glycine--tRNA ligase beta subunit from Haemophilus influenzae (strain PittGG).